A 478-amino-acid polypeptide reads, in one-letter code: Ninja-family protein 7 (478 aa).

Disordered regions lie at residues 1 to 247 (MDDD…LTPG), 336 to 374 (SFTA…EKKA), and 454 to 478 (DAPA…SAEN). Basic and acidic residues predominate over residues 23–35 (KARDAPLEPKAEP). A compositionally biased stretch (polar residues) spans 169 to 179 (ISISTDDGSTG). A compositionally biased stretch (acidic residues) spans 180-189 (ENEDVAESEA). Over residues 233-242 (SFSGSESSSG) the composition is skewed to low complexity. A compositionally biased stretch (basic and acidic residues) spans 339–359 (AKDKADQTGTKQVDDGKKPRE).

It belongs to the Ninja family.

It is found in the nucleus. This chain is Ninja-family protein 7, found in Zea mays (Maize).